The following is an 81-amino-acid chain: Photosystem I iron-sulfur center (81 aa).

4Fe-4S ferredoxin-type domains follow at residues 2–31 (SHKIKIYDTCIGCTQCVRACPTDVLEMIPW) and 39–68 (IASAPRTEDCVGCKRCESACPTDFLSVRVY). [4Fe-4S] cluster contacts are provided by Cys-11, Cys-14, Cys-17, Cys-21, Cys-48, Cys-51, Cys-54, and Cys-58.

As to quaternary structure, the eukaryotic PSI reaction center is composed of at least 11 subunits. It depends on [4Fe-4S] cluster as a cofactor.

It localises to the plastid. It is found in the chloroplast thylakoid membrane. It carries out the reaction reduced [plastocyanin] + hnu + oxidized [2Fe-2S]-[ferredoxin] = oxidized [plastocyanin] + reduced [2Fe-2S]-[ferredoxin]. Functionally, apoprotein for the two 4Fe-4S centers FA and FB of photosystem I (PSI); essential for photochemical activity. FB is the terminal electron acceptor of PSI, donating electrons to ferredoxin. The C-terminus interacts with PsaA/B/D and helps assemble the protein into the PSI complex. Required for binding of PsaD and PsaE to PSI. PSI is a plastocyanin-ferredoxin oxidoreductase, converting photonic excitation into a charge separation, which transfers an electron from the donor P700 chlorophyll pair to the spectroscopically characterized acceptors A0, A1, FX, FA and FB in turn. The polypeptide is Photosystem I iron-sulfur center (Chara vulgaris (Common stonewort)).